Here is a 152-residue protein sequence, read N- to C-terminus: Ribosome maturation factor RimP (152 aa).

The protein belongs to the RimP family.

It localises to the cytoplasm. Required for maturation of 30S ribosomal subunits. This is Ribosome maturation factor RimP from Fervidobacterium nodosum (strain ATCC 35602 / DSM 5306 / Rt17-B1).